Here is a 134-residue protein sequence, read N- to C-terminus: MALLNIFDIAGSALTAQSQRLNVAASNLANADSVTGPDGQPYRAKQVVFQVNAAPGAATGGVKVADVIESQAPDKLVYEPGNPLADAKGYVKMPNVDVVGEMVNTMSASRSYQANVEVLNTVKSMMLKTLTLGQ.

The protein belongs to the flagella basal body rod proteins family. In terms of assembly, the basal body constitutes a major portion of the flagellar organelle and consists of four rings (L,P,S, and M) mounted on a central rod. The rod consists of about 26 subunits of FlgG in the distal portion, and FlgB, FlgC and FlgF are thought to build up the proximal portion of the rod with about 6 subunits each.

Its subcellular location is the bacterial flagellum basal body. This chain is Flagellar basal-body rod protein FlgC (flgC), found in Escherichia coli O157:H7.